A 340-amino-acid chain; its full sequence is Phenylalanine--tRNA ligase alpha subunit (340 aa).

A Mg(2+)-binding site is contributed by Glu-258.

This sequence belongs to the class-II aminoacyl-tRNA synthetase family. Phe-tRNA synthetase alpha subunit type 1 subfamily. As to quaternary structure, tetramer of two alpha and two beta subunits. It depends on Mg(2+) as a cofactor.

Its subcellular location is the cytoplasm. It carries out the reaction tRNA(Phe) + L-phenylalanine + ATP = L-phenylalanyl-tRNA(Phe) + AMP + diphosphate + H(+). The polypeptide is Phenylalanine--tRNA ligase alpha subunit (Corynebacterium glutamicum (strain ATCC 13032 / DSM 20300 / JCM 1318 / BCRC 11384 / CCUG 27702 / LMG 3730 / NBRC 12168 / NCIMB 10025 / NRRL B-2784 / 534)).